The sequence spans 471 residues: tRNA-2-methylthio-N(6)-dimethylallyladenosine synthase (471 aa).

The MTTase N-terminal domain maps to 31–149 (LYYHIETYGC…FPQLLWEALN (119 aa)). Cys40, Cys76, Cys110, Cys186, Cys190, and Cys193 together coordinate [4Fe-4S] cluster. Positions 172–402 (RDSNLKAWVN…IELQNKISLE (231 aa)) constitute a Radical SAM core domain. The 64-residue stretch at 405–468 (AELRGKIVEV…AWTMQGELVE (64 aa)) folds into the TRAM domain.

The protein belongs to the methylthiotransferase family. MiaB subfamily. In terms of assembly, monomer. It depends on [4Fe-4S] cluster as a cofactor.

It localises to the cytoplasm. The enzyme catalyses N(6)-dimethylallyladenosine(37) in tRNA + (sulfur carrier)-SH + AH2 + 2 S-adenosyl-L-methionine = 2-methylsulfanyl-N(6)-dimethylallyladenosine(37) in tRNA + (sulfur carrier)-H + 5'-deoxyadenosine + L-methionine + A + S-adenosyl-L-homocysteine + 2 H(+). Functionally, catalyzes the methylthiolation of N6-(dimethylallyl)adenosine (i(6)A), leading to the formation of 2-methylthio-N6-(dimethylallyl)adenosine (ms(2)i(6)A) at position 37 in tRNAs that read codons beginning with uridine. The protein is tRNA-2-methylthio-N(6)-dimethylallyladenosine synthase of Thermoanaerobacter pseudethanolicus (strain ATCC 33223 / 39E) (Clostridium thermohydrosulfuricum).